The sequence spans 402 residues: 2,3-bisphosphoglycerate-independent phosphoglycerate mutase (402 aa).

Residues 155–174 are disordered; the sequence is SMVSDSDPHRENERPMEVRP. Positions 160–174 are enriched in basic and acidic residues; it reads SDPHRENERPMEVRP.

It belongs to the BPG-independent phosphoglycerate mutase family. A-PGAM subfamily.

It catalyses the reaction (2R)-2-phosphoglycerate = (2R)-3-phosphoglycerate. It functions in the pathway carbohydrate degradation; glycolysis; pyruvate from D-glyceraldehyde 3-phosphate: step 3/5. In terms of biological role, catalyzes the interconversion of 2-phosphoglycerate and 3-phosphoglycerate. This chain is 2,3-bisphosphoglycerate-independent phosphoglycerate mutase, found in Picrophilus torridus (strain ATCC 700027 / DSM 9790 / JCM 10055 / NBRC 100828 / KAW 2/3).